We begin with the raw amino-acid sequence, 464 residues long: MANGKVIQVIGSVVDVEFSADSMPALFNALEIPRDNGKMVLEVQSHVGNNRVKCLSFTPTDGLERGAEVIDTKRPLSVPVGRNTLGRIFNVLGEPLDNRGDVKAEKTMPIHRSAPAMDELESSAQVLETGLKVIDLIAPFARGGKIGALGGAGVGKTVLIQELIRNIATEHEGFSVFAGVGERSREGNDLWHEMEDSGVLPKTTMVFGQMNELPAVRLRIALTGLTMAEYFRDEERQDVLLFIDNIYRYTLAGMEVSALLGRMPSAVGYQPTLATEMGALQERIASTKQGSITSFQAVYVPADDYTDPGVVATFGHLDAMIALERSLAEQALYPAVDPLASNSRILDPQVVGEEHYQVARDVQKVLQRYKDLQDVIAILGMEELSEEDKLTVARARRIQRFLTQPMFVSEVFTGRPGQYVSLAETIRGFKEILEGKHDSLPEQAFYMVGTIDDAVAEAKKLSAA.

ATP is bound at residue 150 to 157; sequence GGAGVGKT.

This sequence belongs to the ATPase alpha/beta chains family. In terms of assembly, F-type ATPases have 2 components, CF(1) - the catalytic core - and CF(0) - the membrane proton channel. CF(1) has five subunits: alpha(3), beta(3), gamma(1), delta(1), epsilon(1). CF(0) has three main subunits: a(1), b(2) and c(9-12). The alpha and beta chains form an alternating ring which encloses part of the gamma chain. CF(1) is attached to CF(0) by a central stalk formed by the gamma and epsilon chains, while a peripheral stalk is formed by the delta and b chains.

It localises to the cell membrane. The catalysed reaction is ATP + H2O + 4 H(+)(in) = ADP + phosphate + 5 H(+)(out). In terms of biological role, produces ATP from ADP in the presence of a proton gradient across the membrane. The catalytic sites are hosted primarily by the beta subunits. This Dehalococcoides mccartyi (strain ATCC BAA-2266 / KCTC 15142 / 195) (Dehalococcoides ethenogenes (strain 195)) protein is ATP synthase subunit beta.